We begin with the raw amino-acid sequence, 107 residues long: Nucleoid-associated protein Msil_0275 (107 aa).

It belongs to the YbaB/EbfC family. As to quaternary structure, homodimer.

The protein localises to the cytoplasm. It localises to the nucleoid. In terms of biological role, binds to DNA and alters its conformation. May be involved in regulation of gene expression, nucleoid organization and DNA protection. The sequence is that of Nucleoid-associated protein Msil_0275 from Methylocella silvestris (strain DSM 15510 / CIP 108128 / LMG 27833 / NCIMB 13906 / BL2).